The chain runs to 389 residues: Probable inactive purple acid phosphatase 29 (389 aa).

Residues 1 to 34 (MADNRRRRSLFDFLLFSVFLGLACLCLSPIPATA) form the signal peptide. The N-linked (GlcNAc...) asparagine glycan is linked to Asn-80. Asn-136 provides a ligand contact to substrate. A Zn(2+)-binding site is contributed by Asn-136. N-linked (GlcNAc...) asparagine glycans are attached at residues Asn-191 and Asn-267. His-303 provides a ligand contact to Zn(2+). Residue 303–305 (HDH) coordinates substrate. Residue His-305 participates in Fe cation binding. Asn-380 carries N-linked (GlcNAc...) asparagine glycosylation.

This sequence belongs to the metallophosphoesterase superfamily. Purple acid phosphatase family. In terms of assembly, homodimer. Requires Fe cation as cofactor. Zn(2+) is required as a cofactor. As to expression, expressed in roots, stems, leaves, flowers and siliques.

The protein resides in the secreted. The protein is Probable inactive purple acid phosphatase 29 (PAP29) of Arabidopsis thaliana (Mouse-ear cress).